We begin with the raw amino-acid sequence, 959 residues long: Translation initiation factor IF-2 (959 aa).

The interval 33 to 373 is disordered; that stretch reads SHASSVEEAD…PVTERKFHEL (341 aa). Residues 46 to 60 show a composition bias toward polar residues; the sequence is IASSFSAGVTKNVQA. Residues 63-73 are compositionally biased toward basic and acidic residues; it reads AKDKQVAEQKA. Positions 76 to 100 are enriched in low complexity; it reads AKATTPQPAASKAAEKPAAATQEAS. Basic and acidic residues-rich tracts occupy residues 112 to 125, 134 to 143, and 179 to 192; these read FKAEREARAKEQVA, SNDRKSDYRQ, and NDGHRQAGNRDKNR. The span at 193 to 211 shows a compositional bias: polar residues; the sequence is SFNANSRQQDIGRQGQTQA. Composition is skewed to basic and acidic residues over residues 234-258 and 266-276; these read ARQRESRFREQEEAKRLEQQARQEA and QTEDKKHREAP. Positions 277 to 287 are enriched in low complexity; the sequence is AKATEPAEPVA. Residues 306–323 are compositionally biased toward basic and acidic residues; it reads NRPDKAHDRDHGLEDGQK. The span at 328-346 shows a compositional bias: low complexity; that stretch reads SWNSQNQVRNQKNSNWNNN. Residues 347–357 show a composition bias toward basic residues; the sequence is KKNKKGKHHKN. Positions 460–629 constitute a tr-type G domain; the sequence is ERAPVVTIMG…LLVAEVEELK (170 aa). The interval 469–476 is G1; the sequence is GHVDHGKT. 469-476 serves as a coordination point for GTP; that stretch reads GHVDHGKT. Positions 494–498 are G2; that stretch reads GITQH. Positions 515–518 are G3; sequence DTPG. GTP contacts are provided by residues 515-519 and 569-572; these read DTPGH and NKID. A G4 region spans residues 569–572; it reads NKID. Positions 605-607 are G5; it reads SAK.

The protein belongs to the TRAFAC class translation factor GTPase superfamily. Classic translation factor GTPase family. IF-2 subfamily.

It is found in the cytoplasm. One of the essential components for the initiation of protein synthesis. Protects formylmethionyl-tRNA from spontaneous hydrolysis and promotes its binding to the 30S ribosomal subunits. Also involved in the hydrolysis of GTP during the formation of the 70S ribosomal complex. This chain is Translation initiation factor IF-2, found in Streptococcus equi subsp. zooepidemicus (strain H70).